The sequence spans 404 residues: Glucose-1-phosphate adenylyltransferase (404 aa).

Alpha-D-glucose 1-phosphate contacts are provided by residues Tyr-99, Gly-164, 179–180 (EK), and Ser-197.

This sequence belongs to the bacterial/plant glucose-1-phosphate adenylyltransferase family.

It catalyses the reaction alpha-D-glucose 1-phosphate + ATP + H(+) = ADP-alpha-D-glucose + diphosphate. The protein operates within glycan biosynthesis; glycogen biosynthesis. In terms of biological role, involved in the biosynthesis of ADP-glucose, a building block, required in the biosynthesis of maltose-1-phosphate (M1P) and in the elongation reactions to produce linear alpha-1,4-glucans. Catalyzes the reaction between ATP and alpha-D-glucose 1-phosphate (G1P) to produce pyrophosphate and ADP-Glc. The polypeptide is Glucose-1-phosphate adenylyltransferase (Mycolicibacterium gilvum (strain PYR-GCK) (Mycobacterium gilvum (strain PYR-GCK))).